The primary structure comprises 121 residues: Small ribosomal subunit protein uS13 (121 aa).

A disordered region spans residues 88 to 121; sequence GMRHRRGLPTRGQNTKNNARTRKGPAKSIAGKKK. The span at 106-121 shows a compositional bias: basic residues; it reads ARTRKGPAKSIAGKKK.

This sequence belongs to the universal ribosomal protein uS13 family. As to quaternary structure, part of the 30S ribosomal subunit. Forms a loose heterodimer with protein S19. Forms two bridges to the 50S subunit in the 70S ribosome.

Located at the top of the head of the 30S subunit, it contacts several helices of the 16S rRNA. In the 70S ribosome it contacts the 23S rRNA (bridge B1a) and protein L5 of the 50S subunit (bridge B1b), connecting the 2 subunits; these bridges are implicated in subunit movement. Contacts the tRNAs in the A and P-sites. The sequence is that of Small ribosomal subunit protein uS13 from Lactococcus lactis subsp. cremoris (strain MG1363).